A 218-amino-acid chain; its full sequence is Grancalcin (218 aa).

EF-hand domains are found at residues 49–84, 85–119, 120–155, and 156–191; these read SSAGDSVYTYFSAVAGQDGEVDAEELQRCLTQSGIS, GTYSPFSLETCRIMIAMLDRDYTGKMGFNAFKELW, SALNAWKENFMTVDQDGSGTVEHHELRQAIGLMGYR, and LSPQTLTTIVKRYSKNGRIFFDDYVACCVKLRALTD. Asp-103, Asp-105, Thr-107, Lys-109, Asp-133, Asp-135, Ser-137, Thr-139, and Glu-144 together coordinate Ca(2+).

As to quaternary structure, homodimer. Interacts with SRI and LCP1.

Its subcellular location is the cytoplasm. The protein resides in the cytoplasmic granule membrane. Functionally, calcium-binding protein that may play a role in the adhesion of neutrophils to fibronectin. May play a role in the formation of focal adhesions. This is Grancalcin (GCA) from Pongo abelii (Sumatran orangutan).